The sequence spans 690 residues: Elongation factor G (690 aa).

In terms of domain architecture, tr-type G spans Glu-8–Ile-283. Residues Ala-17 to Thr-24, Asp-81 to His-85, and Asn-135 to Asp-138 contribute to the GTP site.

Belongs to the TRAFAC class translation factor GTPase superfamily. Classic translation factor GTPase family. EF-G/EF-2 subfamily.

It is found in the cytoplasm. Catalyzes the GTP-dependent ribosomal translocation step during translation elongation. During this step, the ribosome changes from the pre-translocational (PRE) to the post-translocational (POST) state as the newly formed A-site-bound peptidyl-tRNA and P-site-bound deacylated tRNA move to the P and E sites, respectively. Catalyzes the coordinated movement of the two tRNA molecules, the mRNA and conformational changes in the ribosome. The chain is Elongation factor G from Rickettsia canadensis (strain McKiel).